The following is a 285-amino-acid chain: Transcription initiation factor IIE subunit beta (285 aa).

Composition is skewed to polar residues over residues 1 to 10 and 33 to 44; these read MSSLSDQLSS and TPTAYLNSNDGH. Residues 1 to 56 are disordered; the sequence is MSSLSDQLSSFKKKVANQPIYAKPQPRQPASPTPTAYLNSNDGHSSAASSPGSYSL. The segment covering 45–55 has biased composition (low complexity); sequence SSAASSPGSYS. The segment at residues 67–142 is a DNA-binding region (TFIIE beta); the sequence is YSQPADSGVG…FTFKPLHNIR (76 aa). The segment at 240–272 is disordered; the sequence is PTSVDPSTVKRAGHNQTPKQKKPKTRRGKITNT. Residues 258–268 show a composition bias toward basic residues; that stretch reads KQKKPKTRRGK.

It belongs to the TFIIE beta subunit family. As to quaternary structure, TFIIE is a tetramer of two alpha (tfa1) and two beta (tfa2) subunits. TFIIE associates with RNA polymerase II via the beta subunit.

The protein resides in the nucleus. Functionally, recruits TFIIH to the initiation complex and stimulates the RNA polymerase II C-terminal domain kinase and DNA-dependent ATPase activities of TFIIH. Both TFIIH and TFIIE are required for promoter clearance by RNA polymerase. This Schizosaccharomyces pombe (strain 972 / ATCC 24843) (Fission yeast) protein is Transcription initiation factor IIE subunit beta (tfa2).